A 249-amino-acid chain; its full sequence is Probable transcriptional regulatory protein Rru_A1086 (249 aa).

This sequence belongs to the TACO1 family.

Its subcellular location is the cytoplasm. The chain is Probable transcriptional regulatory protein Rru_A1086 from Rhodospirillum rubrum (strain ATCC 11170 / ATH 1.1.1 / DSM 467 / LMG 4362 / NCIMB 8255 / S1).